The chain runs to 63 residues: LKCHKAQFPNIETQCKWQTLCFQRDVKPHPSSMIVLRGCTSSCGKGAMCCATDLCNGPSTPST.

4 disulfide bridges follow: C3–C21, C15–C39, C43–C49, and C50–C55.

This sequence belongs to the three-finger toxin family. Short-chain subfamily. Orphan group XVIII sub-subfamily. In terms of tissue distribution, expressed by the venom gland.

It is found in the secreted. In terms of biological role, blocks both the muscle-twitch response to nerve stimulation and the response to exogenous acetylcholine. In Bungarus fasciatus (Banded krait), this protein is Short neurotoxin 2.